A 738-amino-acid chain; its full sequence is Putative cyclic nucleotide-gated ion channel 7 (738 aa).

At 1–104 (MYKSQYISGQ…DKTLLVWNRL (104 aa)) the chain is on the cytoplasmic side. A helical transmembrane segment spans residues 105–125 (FVISCILAVSVDPLFFYLPIV). At 126 to 139 (DNSGSSCIGIDTKL) the chain is on the extracellular side. The helical transmembrane segment at 140–160 (AVTTTTLRTIVDVFYLTRMAL) threads the bilayer. The Cytoplasmic segment spans residues 161-193 (QFRTAYIAPSSRVFGRGELVIDPAKIAERYLTR). The chain crosses the membrane as a helical span at residues 194 to 214 (YFVVDFLAVLPLPQIAVWKFL). Residues 215-227 (HGSKGSDVLPTKT) are Extracellular-facing. The chain crosses the membrane as a helical span at residues 228 to 248 (ALLNIVIVQYIPRFVRFIPLT). Topologically, residues 249 to 268 (SELKKTAGAFAEGAWAGAAY) are cytoplasmic. The chain crosses the membrane as a helical span at residues 269–289 (YLLWYMLASHITGAFWYMLSV). At 290–395 (ERNDTCWRFA…GQGLQTSTFP (106 aa)) the chain is on the extracellular side. A helical transmembrane segment spans residues 396–416 (GEVLFSIAIAIAGLLLFALLI). Over 417 to 738 (GNMQTYLQSL…KPPEPDFDAE (322 aa)) the chain is Cytoplasmic. Residues 502–632 (LFAN…TFRF) and Glu-573 contribute to the a nucleoside 3',5'-cyclic phosphate site. The tract at residues 618-633 (FRRLHSRQVQQTFRFY) is calmodulin-binding. The 30-residue stretch at 638–667 (RTWASCFIQAAWRRYSRRKNAELRRIEEKE) folds into the IQ domain. Disordered regions lie at residues 671–693 (GYEDEYDDESDKRPMVITRSESS) and 715–738 (LRSSESSKTLINLQKPPEPDFDAE).

This sequence belongs to the cyclic nucleotide-gated cation channel (TC 1.A.1.5) family. As to quaternary structure, homotetramer or heterotetramer.

The protein resides in the cell membrane. Functionally, putative cyclic nucleotide-gated ion channel. This Arabidopsis thaliana (Mouse-ear cress) protein is Putative cyclic nucleotide-gated ion channel 7 (CNGC7).